Here is a 527-residue protein sequence, read N- to C-terminus: Tyrosine--tRNA ligase, cytoplasmic (527 aa).

Tyrosine 39 serves as a coordination point for L-tyrosine. The short motif at 44 to 52 is the 'HIGH' region element; the sequence is TTGKPHVAY. Tyrosine 166, glutamine 170, aspartate 173, and glutamine 188 together coordinate L-tyrosine. The 'KMSKS' region signature appears at 222–226; that stretch reads KMSSS. The Nuclear localization signal motif lies at 242 to 247; that stretch reads KKKLKK. Residues 337-362 form a disordered region; that stretch reads TNAAYPNPSKAKPAEKGTKNSEPETI. Positions 348 to 358 are enriched in basic and acidic residues; it reads KPAEKGTKNSE. One can recognise a tRNA-binding domain in the interval 363–467; the sequence is VPSRLDIRVG…AECCAGERVY (105 aa).

This sequence belongs to the class-I aminoacyl-tRNA synthetase family. In terms of assembly, homodimer.

Its subcellular location is the cytoplasm. It is found in the nucleus. It catalyses the reaction tRNA(Tyr) + L-tyrosine + ATP = L-tyrosyl-tRNA(Tyr) + AMP + diphosphate + H(+). Its function is as follows. Catalyzes the attachment of tyrosine to tRNA(Tyr) in a two-step reaction: tyrosine is first activated by ATP to form Tyr-AMP and then transferred to the acceptor end of tRNA(Tyr). This Gallus gallus (Chicken) protein is Tyrosine--tRNA ligase, cytoplasmic (YARS1).